Consider the following 947-residue polypeptide: Bifunctional glutamine synthetase adenylyltransferase/adenylyl-removing enzyme (947 aa).

Residues 1-440 form an adenylyl removase region; it reads MTPLSSPLSQ…VFNELIGDDE (440 aa). The interval 450–947 is adenylyl transferase; that stretch reads SEPWREVWQD…ASWRKWLVAV (498 aa).

It belongs to the GlnE family. Mg(2+) serves as cofactor.

The enzyme catalyses [glutamine synthetase]-O(4)-(5'-adenylyl)-L-tyrosine + phosphate = [glutamine synthetase]-L-tyrosine + ADP. The catalysed reaction is [glutamine synthetase]-L-tyrosine + ATP = [glutamine synthetase]-O(4)-(5'-adenylyl)-L-tyrosine + diphosphate. Functionally, involved in the regulation of glutamine synthetase GlnA, a key enzyme in the process to assimilate ammonia. When cellular nitrogen levels are high, the C-terminal adenylyl transferase (AT) inactivates GlnA by covalent transfer of an adenylyl group from ATP to specific tyrosine residue of GlnA, thus reducing its activity. Conversely, when nitrogen levels are low, the N-terminal adenylyl removase (AR) activates GlnA by removing the adenylyl group by phosphorolysis, increasing its activity. The regulatory region of GlnE binds the signal transduction protein PII (GlnB) which indicates the nitrogen status of the cell. In Salmonella paratyphi B (strain ATCC BAA-1250 / SPB7), this protein is Bifunctional glutamine synthetase adenylyltransferase/adenylyl-removing enzyme.